A 343-amino-acid polypeptide reads, in one-letter code: 4-hydroxyproline 2-epimerase 1 (343 aa).

Ser90 serves as the catalytic Proton acceptor. Substrate contacts are provided by residues 91–92 (GS), Asp251, and 256–257 (GT).

This sequence belongs to the proline racemase family.

It carries out the reaction trans-4-hydroxy-L-proline = cis-4-hydroxy-D-proline. Functionally, catalyzes the epimerization of trans-4-hydroxy-L-proline (t4LHyp) to cis-4-hydroxy-D-proline (c4DHyp) in vitro, albeit with low efficiency. The physiological substrate may be different. Displays no proline racemase activity. In Brucella anthropi (strain ATCC 49188 / DSM 6882 / CCUG 24695 / JCM 21032 / LMG 3331 / NBRC 15819 / NCTC 12168 / Alc 37) (Ochrobactrum anthropi), this protein is 4-hydroxyproline 2-epimerase 1.